Consider the following 306-residue polypeptide: D-alanine--D-alanine ligase B (306 aa).

The 203-residue stretch at 101 to 303 (KLLWQGAGLP…FSQLVVRILE (203 aa)) folds into the ATP-grasp domain. Residue 134-189 (ISALGLPVIVKPSREGSSVGMSKVVAENALQDALRLAFQHDEEVLIEKWLSGPEFT) coordinates ATP. Residues Asp-257, Glu-270, and Asn-272 each contribute to the Mg(2+) site.

The protein belongs to the D-alanine--D-alanine ligase family. Requires Mg(2+) as cofactor. It depends on Mn(2+) as a cofactor.

Its subcellular location is the cytoplasm. The catalysed reaction is 2 D-alanine + ATP = D-alanyl-D-alanine + ADP + phosphate + H(+). Its pathway is cell wall biogenesis; peptidoglycan biosynthesis. Its function is as follows. Cell wall formation. The protein is D-alanine--D-alanine ligase B of Shigella flexneri.